Consider the following 119-residue polypeptide: Ribosome-binding factor A (119 aa).

This sequence belongs to the RbfA family. Monomer. Binds 30S ribosomal subunits, but not 50S ribosomal subunits or 70S ribosomes.

The protein resides in the cytoplasm. In terms of biological role, one of several proteins that assist in the late maturation steps of the functional core of the 30S ribosomal subunit. Associates with free 30S ribosomal subunits (but not with 30S subunits that are part of 70S ribosomes or polysomes). Required for efficient processing of 16S rRNA. May interact with the 5'-terminal helix region of 16S rRNA. In Chlorobium phaeovibrioides (strain DSM 265 / 1930) (Prosthecochloris vibrioformis (strain DSM 265)), this protein is Ribosome-binding factor A.